Consider the following 367-residue polypeptide: Alginate lyase (367 aa).

Positions M1–A24 are cleaved as a signal peptide. Residues S63–K64, H136–T137, and Y254 each bind substrate.

Belongs to the polysaccharide lyase 5 family.

The protein localises to the periplasm. It catalyses the reaction Eliminative cleavage of alginate to give oligosaccharides with 4-deoxy-alpha-L-erythro-hex-4-enuronosyl groups at their non-reducing ends and beta-D-mannuronate at their reducing end.. Its function is as follows. Catalyzes the depolymerization of alginate by cleaving the beta-1,4 glycosidic bond between two adjacent sugar residues via a beta-elimination mechanism. May serve to degrade mislocalized alginate that is trapped in the periplasmic space. The polypeptide is Alginate lyase (Pseudomonas entomophila (strain L48)).